A 270-amino-acid chain; its full sequence is S-methyl-5'-thioadenosine phosphorylase (270 aa).

Phosphate-binding positions include Ser16, Arg58–His59, and Ser91–Ala92. 3 disulfide bridges follow: Cys138-Cys205, Cys200-Cys262, and Cys259-Cys261. Substrate is bound at residue Met190. Thr191 serves as a coordination point for phosphate. Asp214–Asp216 is a substrate binding site.

This sequence belongs to the PNP/MTAP phosphorylase family. MTAP subfamily. In terms of assembly, homohexamer. Dimer of a homotrimer.

The catalysed reaction is S-methyl-5'-thioadenosine + phosphate = 5-(methylsulfanyl)-alpha-D-ribose 1-phosphate + adenine. It functions in the pathway amino-acid biosynthesis; L-methionine biosynthesis via salvage pathway; S-methyl-5-thio-alpha-D-ribose 1-phosphate from S-methyl-5'-thioadenosine (phosphorylase route): step 1/1. Its function is as follows. Catalyzes the reversible phosphorylation of S-methyl-5'-thioadenosine (MTA) to adenine and 5-methylthioribose-1-phosphate. Involved in the breakdown of MTA, a major by-product of polyamine biosynthesis. Responsible for the first step in the methionine salvage pathway after MTA has been generated from S-adenosylmethionine. Has broad substrate specificity with 6-aminopurine nucleosides as preferred substrates. The polypeptide is S-methyl-5'-thioadenosine phosphorylase (Saccharolobus solfataricus (strain ATCC 35092 / DSM 1617 / JCM 11322 / P2) (Sulfolobus solfataricus)).